The sequence spans 756 residues: Inhibitor of nuclear factor kappa-B kinase subunit beta (756 aa).

The region spanning 15–300 is the Protein kinase domain; it reads WEMKERLGTG…DPVYGPNGCF (286 aa). ATP contacts are provided by residues 21 to 29 and K44; that span reads LGTGGFGNV. The Proton acceptor role is filled by D145. K163 is covalently cross-linked (Glycyl lysine isopeptide (Lys-Gly) (interchain with G-Cter in ubiquitin)). Position 177 is a phosphoserine; by TBK1 and PKC/PRKCZ (S177). C179 bears the S-nitrosocysteine mark. S181 is modified (phosphoserine; by TBK1, PKC/PRKCZ and PDPK1). P191 carries the post-translational modification Hydroxyproline. The tract at residues 458 to 479 is leucine-zipper; that stretch reads LLRNNSCLSKMKNSMASMSQQL. Phosphoserine; by autocatalysis occurs at positions 670, 672, 675, 682, 689, 697, 705, 733, and 740. Positions 737–742 are NEMO-binding; that stretch reads LDWSWL.

Belongs to the protein kinase superfamily. Ser/Thr protein kinase family. I-kappa-B kinase subfamily. As to quaternary structure, component of the I-kappa-B-kinase (IKK) core complex consisting of CHUK, IKBKB and IKBKG; probably four alpha/CHUK-beta/IKBKB dimers are associated with four gamma/IKBKG subunits. The IKK core complex seems to associate with regulatory or adapter proteins to form a IKK-signalosome holo-complex. The IKK complex associates with TERF2IP/RAP1, leading to promote IKK-mediated phosphorylation of RELA/p65. Part of a complex composed of NCOA2, NCOA3, CHUK/IKKA, IKBKB, IKBKG and CREBBP. Part of a 70-90 kDa complex at least consisting of CHUK/IKKA, IKBKB, NFKBIA, RELA, ELP1 and MAP3K14. Found in a membrane raft complex, at least composed of BCL10, CARD11, DPP4 and IKBKB. Interacts with SQSTM1 through PRKCZ or PRKCI. Forms an NGF-induced complex with IKBKB, PRKCI and TRAF6. May interact with MAVS/IPS1. Interacts with NALP2. Interacts with TICAM1. Interacts with FAF1; the interaction disrupts the IKK complex formation. Interacts with ATM. Part of a ternary complex consisting of TANK, IKBKB and IKBKG. Interacts with NIBP; the interaction is direct. Interacts with ARRB1 and ARRB2. Interacts with TRIM21. Interacts with NLRC5; prevents IKBKB phosphorylation and kinase activity. Interacts with PDPK1. Interacts with EIF2AK2/PKR. The phosphorylated form interacts with PPM1A and PPM1B. Interacts with ZNF268; the interaction is further increased in a TNF-alpha-dependent manner. Interacts with IKBKE. Interacts with ZC3H12A. Interacts with AKAP13. Interacts with IFIT5; the interaction synergizes the recruitment of IKK to MAP3K7 and enhances IKK phosphorylation. Interacts with LRRC14; disrupts IKBKB-IKBKG interaction preventing I-kappa-B-kinase (IKK) core complex formation and leading to a decrease of IKBKB phosphorylation and NF-kappaB activation. Interacts with SASH1. Interacts with ARFIP2. Interacts with FKBP5. In terms of processing, upon cytokine stimulation, phosphorylated on Ser-177 and Ser-181 by MEKK1 and/or MAP3K14/NIK as well as TBK1 and PRKCZ; which enhances activity. Phosphorylated by MAP3K7/TAK1 in response to NOD1 and NOD2 signaling, promoting activation and phosphorylation of NF-kappa-B inhibitors, leading to NF-kappa-B activation. Once activated, autophosphorylates on the C-terminal serine cluster; which decreases activity and prevents prolonged activation of the inflammatory response. Phosphorylated by the IKK-related kinases TBK1 and IKBKE, which is associated with reduced CHUK/IKKA and IKBKB activity and NF-kappa-B-dependent gene transcription. Dephosphorylated at Ser-177 and Ser-181 by PPM1A and PPM1B. Ubiquitinated. Monoubiquitination involves TRIM21 that leads to inhibition of Tax-induced NF-kappa-B signaling. 'Ser-163' may not serve as a monoubiquitination site. Ubiquitination on 'Ser-163' may modulate phosphorylation on C-terminal serine residues. Post-translationally, hydroxylated by PHD1/EGLN2, loss of hydroxylation under hypoxic conditions results in activation of NF-kappa-B.

Its subcellular location is the cytoplasm. The protein resides in the nucleus. The protein localises to the membrane raft. The enzyme catalyses L-seryl-[I-kappa-B protein] + ATP = O-phospho-L-seryl-[I-kappa-B protein] + ADP + H(+). It catalyses the reaction L-seryl-[protein] + ATP = O-phospho-L-seryl-[protein] + ADP + H(+). It carries out the reaction L-threonyl-[protein] + ATP = O-phospho-L-threonyl-[protein] + ADP + H(+). In terms of biological role, serine kinase that plays an essential role in the NF-kappa-B signaling pathway which is activated by multiple stimuli such as inflammatory cytokines, bacterial or viral products, DNA damages or other cellular stresses. Acts as a part of the canonical IKK complex in the conventional pathway of NF-kappa-B activation. Phosphorylates inhibitors of NF-kappa-B on 2 critical serine residues. These modifications allow polyubiquitination of the inhibitors and subsequent degradation by the proteasome. In turn, free NF-kappa-B is translocated into the nucleus and activates the transcription of hundreds of genes involved in immune response, growth control, or protection against apoptosis. In addition to the NF-kappa-B inhibitors, phosphorylates several other components of the signaling pathway including NEMO/IKBKG, NF-kappa-B subunits RELA and NFKB1, as well as IKK-related kinases TBK1 and IKBKE. IKK-related kinase phosphorylations may prevent the overproduction of inflammatory mediators since they exert a negative regulation on canonical IKKs. Phosphorylates FOXO3, mediating the TNF-dependent inactivation of this pro-apoptotic transcription factor. Also phosphorylates other substrates including NAA10, NCOA3, BCL10 and IRS1. Phosphorylates RIPK1 at 'Ser-25' which represses its kinase activity and consequently prevents TNF-mediated RIPK1-dependent cell death. Phosphorylates the C-terminus of IRF5, stimulating IRF5 homodimerization and translocation into the nucleus. The sequence is that of Inhibitor of nuclear factor kappa-B kinase subunit beta (IKBKB) from Bos taurus (Bovine).